A 219-amino-acid polypeptide reads, in one-letter code: MIKNGELKPGDKLDSVQALAESFQVSRSAVREALSALKAMGLVEMKQGEGTYLKEFELNQISQPLSAALLMKKEDVKQLLEVRKLLEIGVASLAAEKRTEADLERIQDALKEMGSIEADGELGEKADFAFHLALADASQNELLKHLMNHVSSLLLETMRETRKIWLFSKKTSVQRLYEEHERIYNAVAAGNGAQAEAAMLAHLTNVEDVLSGYFEENVQ.

Residues 1–56 (MIKNGELKPGDKLDSVQALAESFQVSRSAVREALSALKAMGLVEMKQGEGTYLKEF) form the HTH gntR-type domain. The segment at residues 16–35 (VQALAESFQVSRSAVREALS) is a DNA-binding region (H-T-H motif).

In terms of biological role, negatively regulates the transcription of the lutABC operon, which is required for L-lactate utilization. LutR activity is regulated by lactate, since presence of L-lactate, that probably binds to LutR, leads to derepression of the operon. Also appears to be essential for bacilysin biosynthesis. The protein is HTH-type transcriptional regulator LutR (lutR) of Bacillus subtilis (strain 168).